We begin with the raw amino-acid sequence, 686 residues long: Aminodeoxychorismate synthase (686 aa).

Positions 2 to 194 (RTLLIDNYDS…RDLALAHHRA (193 aa)) constitute a Glutamine amidotransferase type-1 domain. The Nucleophile role is filled by cysteine 81. Catalysis depends on residues histidine 168 and glutamate 170. The segment at 233–686 (LDSSSVLEGA…LDGSAVAGAR (454 aa)) is PABB component.

It in the C-terminal section; belongs to the anthranilate synthase component I family.

It catalyses the reaction chorismate + L-glutamine = 4-amino-4-deoxychorismate + L-glutamate. The protein operates within antibiotic biosynthesis. Its function is as follows. Involved in chloramphenicol biosynthesis. Catalyzes the biosynthesis of 4-amino-4-deoxychorismate (ADC) from chorismate and glutamine. In Streptomyces venezuelae (strain ATCC 10712 / CBS 650.69 / DSM 40230 / JCM 4526 / NBRC 13096 / PD 04745), this protein is Aminodeoxychorismate synthase.